We begin with the raw amino-acid sequence, 312 residues long: Cytoplasmic dynein intermediate light chain DYN3 (312 aa).

It belongs to the dynein light intermediate chain DYN3 family. As to quaternary structure, the dynein complex consists of at least two heavy chains and a number of intermediate and light chains. Interacts with DYN1.

It is found in the cytoplasm. Its subcellular location is the cytoskeleton. Component of the cytoplasmic dynein which acts as a motor for the intracellular retrograde motility of vesicles and organelles along microtubules. May play an important role in the proper orientation of the mitotic spindle into the budding daughter cell yeast. Probably required for normal progression of the cell cycle. The polypeptide is Cytoplasmic dynein intermediate light chain DYN3 (DYN3) (Saccharomyces cerevisiae (strain ATCC 204508 / S288c) (Baker's yeast)).